A 142-amino-acid polypeptide reads, in one-letter code: Hemoglobin subunit alpha (142 aa).

The 141-residue stretch at 2 to 142 folds into the Globin domain; sequence VLSAADKTNV…VSTVLTSKYR (141 aa). Residue Ser4 is modified to Phosphoserine. Lys8 is modified (N6-succinyllysine). Thr9 carries the phosphothreonine modification. N6-succinyllysine is present on Lys12. Residue Lys17 is modified to N6-acetyllysine; alternate. Residue Lys17 is modified to N6-succinyllysine; alternate. Phosphotyrosine is present on Tyr25. Lys41 is subject to N6-succinyllysine. Ser50 carries the phosphoserine modification. His59 provides a ligand contact to O2. His88 contacts heme b. Ser103 is modified (phosphoserine). The residue at position 109 (Thr109) is a Phosphothreonine. Phosphoserine occurs at positions 125 and 132. Residues Thr135 and Thr138 each carry the phosphothreonine modification. Ser139 is subject to Phosphoserine.

It belongs to the globin family. As to quaternary structure, heterotetramer of two alpha chains and two beta chains. In terms of tissue distribution, red blood cells.

Functionally, involved in oxygen transport from the lung to the various peripheral tissues. Its function is as follows. Hemopressin acts as an antagonist peptide of the cannabinoid receptor CNR1. Hemopressin-binding efficiently blocks cannabinoid receptor CNR1 and subsequent signaling. The chain is Hemoglobin subunit alpha (HBA) from Equus caballus (Horse).